Consider the following 232-residue polypeptide: 2,3-bisphosphoglycerate-dependent phosphoglycerate mutase (232 aa).

Substrate-binding positions include 10 to 17 (RHGESIWN), 23 to 24 (TG), Arg62, 89 to 92 (ERHY), Lys100, 116 to 117 (RR), and 185 to 186 (GN). His11 functions as the Tele-phosphohistidine intermediate in the catalytic mechanism. Glu89 serves as the catalytic Proton donor/acceptor.

The protein belongs to the phosphoglycerate mutase family. BPG-dependent PGAM subfamily. In terms of assembly, homodimer.

The catalysed reaction is (2R)-2-phosphoglycerate = (2R)-3-phosphoglycerate. The protein operates within carbohydrate degradation; glycolysis; pyruvate from D-glyceraldehyde 3-phosphate: step 3/5. Functionally, catalyzes the interconversion of 2-phosphoglycerate and 3-phosphoglycerate. This is 2,3-bisphosphoglycerate-dependent phosphoglycerate mutase from Buchnera aphidicola subsp. Baizongia pistaciae (strain Bp).